Consider the following 215-residue polypeptide: Pyrrolidone-carboxylate peptidase (215 aa).

Catalysis depends on residues glutamate 80, cysteine 143, and histidine 167.

It belongs to the peptidase C15 family. Homotetramer.

The protein localises to the cytoplasm. The enzyme catalyses Release of an N-terminal pyroglutamyl group from a polypeptide, the second amino acid generally not being Pro.. Removes 5-oxoproline from various penultimate amino acid residues except L-proline. The protein is Pyrrolidone-carboxylate peptidase of Pectobacterium atrosepticum (strain SCRI 1043 / ATCC BAA-672) (Erwinia carotovora subsp. atroseptica).